The sequence spans 242 residues: Small ribosomal subunit protein uS7m (242 aa).

A mitochondrion-targeting transit peptide spans 1–37; that stretch reads MAAPALRAPLRWSGLALGVRCAVWNLPGLTQVRGSRY. Lys-228 is subject to N6-acetyllysine.

It belongs to the universal ribosomal protein uS7 family. In terms of assembly, component of the mitochondrial ribosome small subunit (28S) which comprises a 12S rRNA and about 30 distinct proteins.

It is found in the mitochondrion. This chain is Small ribosomal subunit protein uS7m (Mrps7), found in Mus musculus (Mouse).